Reading from the N-terminus, the 193-residue chain is Putative anthranilate synthase component II (193 aa).

Residues 2–193 form the Glutamine amidotransferase type-1 domain; the sequence is KLLIINNHDS…WLAIPPTTNP (192 aa). Residues C78, H168, and E170 contribute to the active site.

In terms of assembly, tetramer of two components I and two components II.

The enzyme catalyses chorismate + L-glutamine = anthranilate + pyruvate + L-glutamate + H(+). It participates in amino-acid biosynthesis; L-tryptophan biosynthesis; L-tryptophan from chorismate: step 1/5. The protein is Putative anthranilate synthase component II of Haemophilus influenzae (strain ATCC 51907 / DSM 11121 / KW20 / Rd).